Reading from the N-terminus, the 288-residue chain is NAD kinase (288 aa).

The active-site Proton acceptor is D70. Residues 70–71 (DG), 144–145 (ND), R155, K172, D174, 185–190 (TGYSLS), and Q245 contribute to the NAD(+) site.

The protein belongs to the NAD kinase family. It depends on a divalent metal cation as a cofactor.

The protein localises to the cytoplasm. It catalyses the reaction NAD(+) + ATP = ADP + NADP(+) + H(+). Involved in the regulation of the intracellular balance of NAD and NADP, and is a key enzyme in the biosynthesis of NADP. Catalyzes specifically the phosphorylation on 2'-hydroxyl of the adenosine moiety of NAD to yield NADP. This is NAD kinase from Citrifermentans bemidjiense (strain ATCC BAA-1014 / DSM 16622 / JCM 12645 / Bem) (Geobacter bemidjiensis).